The sequence spans 83 residues: Small ribosomal subunit protein uS17 (83 aa).

The protein belongs to the universal ribosomal protein uS17 family. As to quaternary structure, part of the 30S ribosomal subunit.

Functionally, one of the primary rRNA binding proteins, it binds specifically to the 5'-end of 16S ribosomal RNA. In Ehrlichia chaffeensis (strain ATCC CRL-10679 / Arkansas), this protein is Small ribosomal subunit protein uS17.